We begin with the raw amino-acid sequence, 332 residues long: GTP 3',8-cyclase (332 aa).

In terms of domain architecture, Radical SAM core spans 9–220 (RFARKVDYLR…DQVRERIAER (212 aa)). R18 contacts GTP. [4Fe-4S] cluster contacts are provided by C25 and C29. Y31 contacts S-adenosyl-L-methionine. Residue C32 coordinates [4Fe-4S] cluster. Position 67 (R67) interacts with GTP. G71 serves as a coordination point for S-adenosyl-L-methionine. GTP is bound at residue T98. S122 serves as a coordination point for S-adenosyl-L-methionine. Residue K159 participates in GTP binding. M193 provides a ligand contact to S-adenosyl-L-methionine. The [4Fe-4S] cluster site is built by C258 and C261. A GTP-binding site is contributed by 263–265 (RVR). C275 contacts [4Fe-4S] cluster.

Belongs to the radical SAM superfamily. MoaA family. As to quaternary structure, monomer and homodimer. [4Fe-4S] cluster is required as a cofactor.

It carries out the reaction GTP + AH2 + S-adenosyl-L-methionine = (8S)-3',8-cyclo-7,8-dihydroguanosine 5'-triphosphate + 5'-deoxyadenosine + L-methionine + A + H(+). Its pathway is cofactor biosynthesis; molybdopterin biosynthesis. Functionally, catalyzes the cyclization of GTP to (8S)-3',8-cyclo-7,8-dihydroguanosine 5'-triphosphate. The chain is GTP 3',8-cyclase from Pseudomonas savastanoi pv. phaseolicola (strain 1448A / Race 6) (Pseudomonas syringae pv. phaseolicola (strain 1448A / Race 6)).